A 38-amino-acid chain; its full sequence is Augerpeptide hhe53 (38 aa).

In terms of processing, contains 2 disulfide bonds. Expressed by the venom duct.

It localises to the secreted. The polypeptide is Augerpeptide hhe53 (Hastula hectica (Sea snail)).